We begin with the raw amino-acid sequence, 496 residues long: Glycerol kinase (496 aa).

Residue threonine 12 coordinates ADP. ATP contacts are provided by threonine 12, threonine 13, and serine 14. Threonine 12 is a sn-glycerol 3-phosphate binding site. Arginine 16 contributes to the ADP binding site. Residues arginine 82, glutamate 83, and tyrosine 134 each coordinate sn-glycerol 3-phosphate. Positions 82, 83, and 134 each coordinate glycerol. Position 230 is a phosphohistidine; by HPr (histidine 230). Aspartate 244 contributes to the sn-glycerol 3-phosphate binding site. The glycerol site is built by aspartate 244 and glutamine 245. Residues threonine 266 and glycine 309 each coordinate ADP. Positions 266, 309, 313, and 410 each coordinate ATP. Residues glycine 410 and asparagine 414 each coordinate ADP.

It belongs to the FGGY kinase family. Homotetramer and homodimer (in equilibrium). Post-translationally, the phosphoenolpyruvate-dependent sugar phosphotransferase system (PTS), including enzyme I, and histidine-containing protein (HPr) are required for the phosphorylation, which leads to the activation of the enzyme.

The enzyme catalyses glycerol + ATP = sn-glycerol 3-phosphate + ADP + H(+). Its pathway is polyol metabolism; glycerol degradation via glycerol kinase pathway; sn-glycerol 3-phosphate from glycerol: step 1/1. With respect to regulation, activated by phosphorylation and inhibited by fructose 1,6-bisphosphate (FBP). In terms of biological role, key enzyme in the regulation of glycerol uptake and metabolism. Catalyzes the phosphorylation of glycerol to yield sn-glycerol 3-phosphate. The chain is Glycerol kinase from Bacillus mycoides (strain KBAB4) (Bacillus weihenstephanensis).